The sequence spans 108 residues: uncharacterized protein (108 aa).

2 consecutive transmembrane segments (helical) span residues 5 to 27 (TVYGLAYLFYSGINCILLYQLEI) and 83 to 105 (IFLMTSIIDIASFKAQVLFLNIF).

It localises to the membrane. This is an uncharacterized protein from Schizosaccharomyces pombe (strain 972 / ATCC 24843) (Fission yeast).